The chain runs to 57 residues: Lantibiotic nukacin (57 aa).

Positions 1–30 (MENSKVMKDIEVANLLEEVQEDELNEVLGA) are excised as a propeptide. The beta-methyllanthionine (Thr-Cys) cross-link spans 39-44 (TVSHDC). Cross-links (lanthionine (Ser-Cys)) lie at residues 41-55 (SHDCHMNSFQFVFTC) and 48-56 (SFQFVFTCC). 2,3-didehydrobutyrine is present on threonine 54.

In terms of processing, maturation of lantibiotics involves the enzymatic conversion of Thr, and Ser into dehydrated AA and the formation of thioether bonds with cysteine. This is followed by membrane translocation and cleavage of the modified precursor.

Its subcellular location is the secreted. Functionally, lanthionine-containing peptide antibiotic (lantibiotic) active on Gram-positive bacteria. The bactericidal activity of lantibiotics is based on depolarization of energized bacterial cytoplasmic membranes, initiated by the formation of aqueous transmembrane pores. This is Lantibiotic nukacin from Staphylococcus simulans.